The chain runs to 696 residues: Serine/threonine-protein kinase sck1 (696 aa).

2 disordered regions span residues 1 to 59 (MTEI…YDPV) and 77 to 118 (HKEQ…TPPS). Residues 11-37 (SSNSENTNQASPSTIQSHSTQPVLSND) show a composition bias toward polar residues. Basic and acidic residues-rich tracts occupy residues 38–49 (HSTKVNDYEGKE) and 77–88 (HKEQSLKEDKES). The 151-residue stretch at 122–272 (IRHDTVVPKD…VQEAWYKLEP (151 aa)) folds into the C2 domain. The 262-residue stretch at 302-563 (FTALRLIGKG…TTELKEHPFF (262 aa)) folds into the Protein kinase domain. ATP is bound by residues 308–316 (IGKGTFGQV) and K331. Catalysis depends on D428, which acts as the Proton acceptor. The region spanning 564–643 (ADINWDLLSK…VNKSIDEQFQ (80 aa)) is the AGC-kinase C-terminal domain. T632 carries the post-translational modification Phosphothreonine. The residue at position 665 (S665) is a Phosphoserine.

It belongs to the protein kinase superfamily. AGC Ser/Thr protein kinase family. cAMP subfamily.

It carries out the reaction L-seryl-[protein] + ATP = O-phospho-L-seryl-[protein] + ADP + H(+). It catalyses the reaction L-threonyl-[protein] + ATP = O-phospho-L-threonyl-[protein] + ADP + H(+). Protein kinase that is part of growth control pathway which is at least partially redundant with the cAMP pathway. Required for trehalase activation. The protein is Serine/threonine-protein kinase sck1 (sck1) of Schizosaccharomyces pombe (strain 972 / ATCC 24843) (Fission yeast).